We begin with the raw amino-acid sequence, 466 residues long: 3-isopropylmalate dehydratase large subunit (466 aa).

The [4Fe-4S] cluster site is built by Cys347, Cys407, and Cys410.

It belongs to the aconitase/IPM isomerase family. LeuC type 1 subfamily. In terms of assembly, heterodimer of LeuC and LeuD. [4Fe-4S] cluster serves as cofactor.

It catalyses the reaction (2R,3S)-3-isopropylmalate = (2S)-2-isopropylmalate. The protein operates within amino-acid biosynthesis; L-leucine biosynthesis; L-leucine from 3-methyl-2-oxobutanoate: step 2/4. Catalyzes the isomerization between 2-isopropylmalate and 3-isopropylmalate, via the formation of 2-isopropylmaleate. This chain is 3-isopropylmalate dehydratase large subunit, found in Vibrio vulnificus (strain YJ016).